The sequence spans 1133 residues: Eukaryotic translation initiation factor 3 subunit A (1133 aa).

The region spanning 317–498 (IQRMTSHVLI…HCVHFGTDLS (182 aa)) is the PCI domain. Coiled coils occupy residues 573 to 700 (KKIE…YFER) and 784 to 886 (EEER…EADS). Over residues 810-893 (KEEERRRAEE…ADSWRDRRGG (84 aa)) the composition is skewed to basic and acidic residues. A disordered region spans residues 810 to 1133 (KEEERRRAEE…DGWTDVKHHR (324 aa)). The segment covering 895–909 (APAAAAQPNPAAQEA) has biased composition (low complexity). Composition is skewed to basic and acidic residues over residues 920 to 944 (GARE…RDVR), 954 to 1081 (VERR…DSAW), and 1097 to 1117 (TRQD…KEAR).

It belongs to the eIF-3 subunit A family. As to quaternary structure, component of the eukaryotic translation initiation factor 3 (eIF-3) complex.

The protein resides in the cytoplasm. Functionally, RNA-binding component of the eukaryotic translation initiation factor 3 (eIF-3) complex, which is involved in protein synthesis of a specialized repertoire of mRNAs and, together with other initiation factors, stimulates binding of mRNA and methionyl-tRNAi to the 40S ribosome. The eIF-3 complex specifically targets and initiates translation of a subset of mRNAs involved in cell proliferation. This is Eukaryotic translation initiation factor 3 subunit A from Aedes aegypti (Yellowfever mosquito).